A 569-amino-acid chain; its full sequence is Arylsulfatase I (569 aa).

Positions 1 to 23 (MHTLTGFSLVSLLSFGYLSWDWA) are cleaved as a signal peptide. The Ca(2+) site is built by Asp55, Asp56, and Cys93. Residue Cys93 is the Nucleophile of the active site. Cys93 is subject to 3-oxoalanine (Cys). Lys147 is a binding site for substrate. The active site involves His149. A substrate-binding site is contributed by His239. N-linked (GlcNAc...) asparagine glycosylation is found at Asn276 and Asn288. Residues Asp297 and Asn298 each coordinate Ca(2+). Lys315 serves as a coordination point for substrate. Residues Asn466 and Asn496 are each glycosylated (N-linked (GlcNAc...) asparagine). Residues 510–539 (RAHPDFNGGAWGPWASDEEEEEEEGRARSF) form a disordered region.

This sequence belongs to the sulfatase family. Ca(2+) is required as a cofactor. The oxidation of Cys-93 residue to 3-oxoalanine (also known as C(alpha)-formylglycine) by SUMF1/Sulfatase-modifying factor 1, seems critical for catalytic activity. Expressed in placenta, in embryonic stem cells, fetal eyes and lens.

The protein localises to the secreted. The protein resides in the endoplasmic reticulum. Functionally, displays arylsulfatase activity at neutral pH, when co-expressed with SUMF1; arylsulfatase activity is measured in the secretion medium of retinal cell line, but no activity is recorded when measured in cell extracts. Lacks arylsulfatase activity. The protein is Arylsulfatase I (ARSI) of Homo sapiens (Human).